We begin with the raw amino-acid sequence, 1342 residues long: DNA-directed RNA polymerase subunit beta (1342 aa).

Belongs to the RNA polymerase beta chain family. As to quaternary structure, the RNAP catalytic core consists of 2 alpha, 1 beta, 1 beta' and 1 omega subunit. When a sigma factor is associated with the core the holoenzyme is formed, which can initiate transcription.

It carries out the reaction RNA(n) + a ribonucleoside 5'-triphosphate = RNA(n+1) + diphosphate. DNA-dependent RNA polymerase catalyzes the transcription of DNA into RNA using the four ribonucleoside triphosphates as substrates. This chain is DNA-directed RNA polymerase subunit beta, found in Klebsiella pneumoniae subsp. pneumoniae (strain ATCC 700721 / MGH 78578).